We begin with the raw amino-acid sequence, 962 residues long: Exportin-T (962 aa).

Met1 is subject to N-acetylmethionine. The residue at position 634 (Lys634) is an N6-acetyllysine.

In terms of assembly, found in a complex with XPOT, Ran and tRNA. Probably found in a complex with nucleoporins. Interacts with Ran and tRNA in a GTP-dependent manner.

Its subcellular location is the nucleus. It localises to the cytoplasm. Its function is as follows. Mediates the nuclear export of aminoacylated tRNAs. In the nucleus binds to tRNA and to the GTPase Ran in its active GTP-bound form. Docking of this trimeric complex to the nuclear pore complex (NPC) is mediated through binding to nucleoporins. Upon transit of a nuclear export complex into the cytoplasm, disassembling of the complex and hydrolysis of Ran-GTP to Ran-GDP (induced by RANBP1 and RANGAP1, respectively) cause release of the tRNA from the export receptor. XPOT then return to the nuclear compartment and mediate another round of transport. The directionality of nuclear export is thought to be conferred by an asymmetric distribution of the GTP- and GDP-bound forms of Ran between the cytoplasm and nucleus. This is Exportin-T (XPOT) from Pongo abelii (Sumatran orangutan).